The sequence spans 238 residues: Small proline-rich protein 3 (238 aa).

The interval 1 to 67 (MSSYQQKQPF…CSTKVPEPGN (67 aa)) is disordered. Residue Ser2 is modified to N-acetylserine. 21 tandem repeats follow at residues 52–59 (TKIPEPCS), 60–67 (TKVPEPGN), 68–75 (TVVLEPDY), 76–83 (TTMPGPCS), 84–91 (TNITEPDY), 92–99 (TTIPGPCS), 100–107 (TNITEPDY), 108–115 (TTIPGPCS), 116–123 (TNIPGPDR), 124–131 (TVVPGSCS), 132–139 (TNITEPDY), 140–147 (TTIPGPSS), 148–155 (TKIPDPGC), 156–163 (AMVPGPSP), 164–175 (SSTSEPSSEPCS), 176–183 (INVREPGY), 184–191 (MNASEPTH), 192–199 (AKVPDQGY), 200–207 (TKIPDQGS), 208–215 (SKVPEPCQ), and 216–223 (SRVPEVCP). A 21 X 8 AA approximate tandem repeats region spans residues 52 to 223 (TKIPEPCSTK…CQSRVPEVCP (172 aa)). The disordered stretch occupies residues 110 to 238 (IPGPCSTNIP…VSAKQKTKQK (129 aa)). Over residues 163 to 175 (PSSTSEPSSEPCS) the composition is skewed to low complexity.

The protein belongs to the cornifin (SPRR) family.

The protein localises to the cytoplasm. Its function is as follows. Cross-linked envelope protein of keratinocytes. The polypeptide is Small proline-rich protein 3 (Sprr3) (Mus musculus (Mouse)).